Here is a 223-residue protein sequence, read N- to C-terminus: Probable cytokinin riboside 5'-monophosphate phosphoribohydrolase LOGL1 (223 aa).

Substrate is bound by residues E89, 107 to 108, 124 to 130, and T136; these read RK and GYGTMEE. Positions 201–223 are disordered; sequence QEVAPRTSWEMSELGYGKTPEES.

It belongs to the LOG family. In terms of tissue distribution, expressed in shoot apex, immature inflorescences and flowers.

The enzyme catalyses N(6)-(dimethylallyl)adenosine 5'-phosphate + H2O = N(6)-dimethylallyladenine + D-ribose 5-phosphate. It carries out the reaction 9-ribosyl-trans-zeatin 5'-phosphate + H2O = trans-zeatin + D-ribose 5-phosphate. In terms of biological role, cytokinin-activating enzyme working in the direct activation pathway. Phosphoribohydrolase that converts inactive cytokinin nucleotides to the biologically active free-base forms. The sequence is that of Probable cytokinin riboside 5'-monophosphate phosphoribohydrolase LOGL1 (LOGL1) from Oryza sativa subsp. japonica (Rice).